The chain runs to 49 residues: uncharacterized protein (49 aa).

This is an uncharacterized protein from Sulfolobus spindle-shape virus 1 (SSV1).